A 638-amino-acid polypeptide reads, in one-letter code: DNA mismatch repair protein MutL (638 aa).

Positions glycine 398–glutamate 435 are disordered.

The protein belongs to the DNA mismatch repair MutL/HexB family.

Its function is as follows. This protein is involved in the repair of mismatches in DNA. It is required for dam-dependent methyl-directed DNA mismatch repair. May act as a 'molecular matchmaker', a protein that promotes the formation of a stable complex between two or more DNA-binding proteins in an ATP-dependent manner without itself being part of a final effector complex. This is DNA mismatch repair protein MutL from Shewanella baltica (strain OS155 / ATCC BAA-1091).